A 100-amino-acid chain; its full sequence is Aspartyl/glutamyl-tRNA(Asn/Gln) amidotransferase subunit C (100 aa).

Belongs to the GatC family. In terms of assembly, heterotrimer of A, B and C subunits.

It carries out the reaction L-glutamyl-tRNA(Gln) + L-glutamine + ATP + H2O = L-glutaminyl-tRNA(Gln) + L-glutamate + ADP + phosphate + H(+). The catalysed reaction is L-aspartyl-tRNA(Asn) + L-glutamine + ATP + H2O = L-asparaginyl-tRNA(Asn) + L-glutamate + ADP + phosphate + 2 H(+). Functionally, allows the formation of correctly charged Asn-tRNA(Asn) or Gln-tRNA(Gln) through the transamidation of misacylated Asp-tRNA(Asn) or Glu-tRNA(Gln) in organisms which lack either or both of asparaginyl-tRNA or glutaminyl-tRNA synthetases. The reaction takes place in the presence of glutamine and ATP through an activated phospho-Asp-tRNA(Asn) or phospho-Glu-tRNA(Gln). The sequence is that of Aspartyl/glutamyl-tRNA(Asn/Gln) amidotransferase subunit C from Novosphingobium aromaticivorans (strain ATCC 700278 / DSM 12444 / CCUG 56034 / CIP 105152 / NBRC 16084 / F199).